A 488-amino-acid chain; its full sequence is ATP-dependent RNA helicase dbp3 (488 aa).

A compositionally biased stretch (basic and acidic residues) spans 1 to 29 (MAKREHQDQTGDSRPSKKSKGTKDTKKNT). A disordered region spans residues 1–42 (MAKREHQDQTGDSRPSKKSKGTKDTKKNTEVSPPYFQSPALD). The short motif at 92-100 (GFASPTAIQ) is the Q motif element. The Helicase ATP-binding domain maps to 104–279 (WPLLFAGRDV…STFMTSPVTV (176 aa)). 117–124 (AETGSGKT) contributes to the ATP binding site. Positions 226-229 (DEAD) match the DEAD box motif. The Helicase C-terminal domain maps to 306 to 457 (EKEQRLVQIL…EVPEALLKFG (152 aa)).

It belongs to the DEAD box helicase family. DDX5/DBP2 subfamily.

The protein localises to the nucleus. It localises to the nucleolus. It catalyses the reaction ATP + H2O = ADP + phosphate + H(+). Its function is as follows. ATP-dependent RNA helicase required for 60S ribosomal subunit synthesis. Involved in efficient pre-rRNA processing, predominantly at site A3, which is necessary for the normal formation of 25S and 5.8S rRNAs. The polypeptide is ATP-dependent RNA helicase dbp3 (dbp3) (Emericella nidulans (strain FGSC A4 / ATCC 38163 / CBS 112.46 / NRRL 194 / M139) (Aspergillus nidulans)).